Consider the following 196-residue polypeptide: SAGA-associated factor 11 homolog (196 aa).

The segment at 102–123 adopts an SGF11-type zinc-finger fold; the sequence is CTCPNCDRLVAAARFAPHLEKC. The segment at 140–196 is disordered; sequence TKEGTSASSNSSYVHSGANAGGTDDEDDVDWSSDKRKKKSTQNSRNNGSKKNNGKTF. Over residues 142 to 153 the composition is skewed to polar residues; it reads EGTSASSNSSYV. Ser172 carries the post-translational modification Phosphoserine. A compositionally biased stretch (low complexity) spans 182–196; that stretch reads NSRNNGSKKNNGKTF.

Belongs to the SGF11 family. Component of some SAGA transcription coactivator-HAT complexes, at least composed of Ada2b, not/nonstop, Pcaf/Gcn5, Sgf11 and Spt3. Within the SAGA complex, Sgf11, e(y)2, and not/nonstop form an additional subcomplex of SAGA called the DUB module (deubiquitination module). Interacts directly with not/nonstop. Interacts with the AMEX complex component xmas-2. Interacts with Cbp80; important for promoter recruitment of Sgf11 that is not associated with the DUB module.

The protein resides in the nucleus. It localises to the nucleoplasm. It is found in the cytoplasm. Its function is as follows. Component of the transcription regulatory histone acetylation (HAT) complex SAGA, a multiprotein complex that activates transcription by remodeling chromatin and mediating histone acetylation and deubiquitination. Within the SAGA complex, participates in a subcomplex that specifically deubiquitinates histone H2B. The SAGA complex is recruited to specific gene promoters by activators, where it is required for transcription. Required for nuclear receptor-mediated transactivation. Binds independently on SAGA to promoters in an RNA-dependent manner. Binds to mRNA and is essential for total mRNA export from the nucleus. Required to counteract heterochromatin silencing. Controls the development of neuronal connectivity in visual system by being required for accurate axon targeting in the optic lobe. Required for expression of ecdysone-induced genes such as br/broad. In Drosophila persimilis (Fruit fly), this protein is SAGA-associated factor 11 homolog.